We begin with the raw amino-acid sequence, 275 residues long: Cis-2,3-dihydrobiphenyl-2,3-diol dehydrogenase (275 aa).

NAD(+) is bound at residue 9 to 33 (LITGGASGLGRALVDRFVAEAKVAV). Serine 140 provides a ligand contact to substrate. Catalysis depends on tyrosine 153, which acts as the Proton acceptor.

The protein belongs to the short-chain dehydrogenases/reductases (SDR) family.

It catalyses the reaction (2R,3S)-3-phenylcyclohexa-3,5-diene-1,2-diol + NAD(+) = biphenyl-2,3-diol + NADH + H(+). It functions in the pathway xenobiotic degradation; biphenyl degradation; 2-hydroxy-2,4-pentadienoate and benzoate from biphenyl: step 2/4. The polypeptide is Cis-2,3-dihydrobiphenyl-2,3-diol dehydrogenase (bphB) (Metapseudomonas furukawaii (Pseudomonas furukawaii)).